A 103-amino-acid polypeptide reads, in one-letter code: Cyclotide vitri-A (103 aa).

Positions 1–9 are cleaved as a signal peptide; sequence AAFALPAFA. A propeptide spanning residues 10 to 69 is cleaved from the precursor; the sequence is SFEKDVITPAALEAVLNRKAPLSNIMMENDAIVNVIANVKTVISNPVLEEALLKTNHGVN. Residues 70–99 constitute a cross-link (cyclopeptide (Gly-Asn)); the sequence is GIPCGESCVWIPCITSAIGCSCKSKVCYRN. 3 disulfide bridges follow: C73-C89, C77-C91, and C82-C96. Positions 100-103 are excised as a propeptide; that stretch reads SLDN.

In terms of processing, this is a cyclic peptide.

In terms of biological role, probably participates in a plant defense mechanism. In Viola biflora (Yellow wood violet), this protein is Cyclotide vitri-A.